Here is a 500-residue protein sequence, read N- to C-terminus: E3 ubiquitin-protein ligase TRIM69 (500 aa).

Residues 1-22 (MEVSSRPPSNFDPGNYVEMSDP) form a disordered region. A necessary for nuclear localization region spans residues 1 to 153 (MEVSSRPPSN…SMGQSKDFLQ (153 aa)). An RING-type zinc finger spans residues 42 to 83 (CPLCNDWFRDPLMLTCGHNFCQDCIQSFWKVHSKETFCPDCK). Residues 217–256 (NKEKDILNDLRDEGKLLNEEMEVNLNQIQEQCLVAKDMLA) adopt a coiled-coil conformation. Positions 306 to 500 (PIQYIIWKEM…KEPLHIVHPQ (195 aa)) constitute a B30.2/SPRY domain. Phosphoserine is present on S342.

Belongs to the TRIM/RBCC family. As to quaternary structure, homo-multimer; required for antiviral activity. Interacts with PML. Phosphorylated. Phosphorylation is necessary for nuclear localization. Expressed in spermatid.

It localises to the cytoplasm. It is found in the nucleus. The protein resides in the nucleus speckle. The protein localises to the cytoskeleton. Its subcellular location is the microtubule organizing center. It localises to the centrosome. The enzyme catalyses S-ubiquitinyl-[E2 ubiquitin-conjugating enzyme]-L-cysteine + [acceptor protein]-L-lysine = [E2 ubiquitin-conjugating enzyme]-L-cysteine + N(6)-ubiquitinyl-[acceptor protein]-L-lysine.. The protein operates within protein modification; protein ubiquitination. Functionally, E3 ubiquitin ligase that plays an important role in antiviral immunity by restricting different viral infections including dengue virus or vesicular stomatitis indiana virus. Ubiquitinates viral proteins such as dengue virus NS3 thereby limiting infection. In addition, acts as a key mediator of type I interferon induced microtubule stabilization by directly associating to microtubules independently of its E3 ligase activity. Also plays a role in cataract formation together with TP53. Mechanistically, inhibits UVB-induced cell apoptosis and reactive oxygen species (ROS) production by inducing TP53 ubiquitination. Regulates centrosome dynamics and mitotic progression by ubiquitinating STK3/MST2; leading to its redistribution to the perinuclear cytoskeleton and subsequent phosphorylation by PLK1. In Mus musculus (Mouse), this protein is E3 ubiquitin-protein ligase TRIM69 (Trim69).